A 251-amino-acid polypeptide reads, in one-letter code: Ubiquinone/menaquinone biosynthesis C-methyltransferase UbiE (251 aa).

S-adenosyl-L-methionine is bound by residues Thr74, Asp95, 123–124, and Ser140; that span reads NA.

The protein belongs to the class I-like SAM-binding methyltransferase superfamily. MenG/UbiE family.

It catalyses the reaction a 2-demethylmenaquinol + S-adenosyl-L-methionine = a menaquinol + S-adenosyl-L-homocysteine + H(+). The catalysed reaction is a 2-methoxy-6-(all-trans-polyprenyl)benzene-1,4-diol + S-adenosyl-L-methionine = a 5-methoxy-2-methyl-3-(all-trans-polyprenyl)benzene-1,4-diol + S-adenosyl-L-homocysteine + H(+). The protein operates within quinol/quinone metabolism; menaquinone biosynthesis; menaquinol from 1,4-dihydroxy-2-naphthoate: step 2/2. Its pathway is cofactor biosynthesis; ubiquinone biosynthesis. Functionally, methyltransferase required for the conversion of demethylmenaquinol (DMKH2) to menaquinol (MKH2) and the conversion of 2-polyprenyl-6-methoxy-1,4-benzoquinol (DDMQH2) to 2-polyprenyl-3-methyl-6-methoxy-1,4-benzoquinol (DMQH2). This Yersinia pestis bv. Antiqua (strain Antiqua) protein is Ubiquinone/menaquinone biosynthesis C-methyltransferase UbiE.